Here is a 134-residue protein sequence, read N- to C-terminus: Small ribosomal subunit protein uS9 (134 aa).

The interval 114 to 134 is disordered; the sequence is EVERKKYGLKKARRAPQFSKR. Basic residues predominate over residues 120–134; it reads YGLKKARRAPQFSKR.

It belongs to the universal ribosomal protein uS9 family.

This is Small ribosomal subunit protein uS9 from Thermotoga neapolitana (strain ATCC 49049 / DSM 4359 / NBRC 107923 / NS-E).